We begin with the raw amino-acid sequence, 2245 residues long: Basic helix-loop-helix domain-containing protein USF3 (2245 aa).

Residues Met1–Arg28 form a disordered region. The 52-residue stretch at Lys18–Leu69 folds into the bHLH domain. Positions Leu77–Ala112 form a coiled coil. 13 disordered regions span residues Leu271 to Pro290, Ser447 to His470, Ser881 to Glu900, Ala906 to Asp933, Lys1015 to Ser1041, Pro1164 to Ser1238, Ile1307 to Ala1331, Ile1460 to His1624, Leu1636 to Arg1664, Thr1736 to Val1764, Ile1777 to Cys1815, Gly1834 to Pro1859, and Ser1891 to Thr2031. Residues Thr273 to Glu288 show a composition bias toward polar residues. Positions Ser881–Ser896 are enriched in low complexity. Residues Ser912–Pro925 are compositionally biased toward polar residues. 2 stretches are compositionally biased toward polar residues: residues Gly1185–Ile1202 and Ile1219–Ser1238. Over residues Pro1319–Ala1331 the composition is skewed to basic and acidic residues. Residues Gln1462–Gln1478 are compositionally biased toward low complexity. Polar residues-rich tracts occupy residues Ser1501–Gln1520 and Val1528–Leu1538. Residues Gln1560–His1569 show a composition bias toward low complexity. The segment covering Phe1570 to Ser1585 has biased composition (polar residues). Low complexity predominate over residues Gln1593–His1624. Over residues Leu1636–Thr1654 the composition is skewed to polar residues. 2 stretches are compositionally biased toward polar residues: residues Gly1904–Met1923 and Ser1998–Phe2007.

It is found in the nucleus. Functionally, involved in the negative regulation of epithelial-mesenchymal transition, the process by which epithelial cells lose their polarity and adhesion properties to become mesenchymal cells with enhanced migration and invasive properties. This is Basic helix-loop-helix domain-containing protein USF3 from Homo sapiens (Human).